The chain runs to 324 residues: Homoserine kinase (324 aa).

100 to 110 (PLSSGMGSSAA) serves as a coordination point for ATP.

The protein belongs to the GHMP kinase family. Homoserine kinase subfamily.

It is found in the cytoplasm. It catalyses the reaction L-homoserine + ATP = O-phospho-L-homoserine + ADP + H(+). It participates in amino-acid biosynthesis; L-threonine biosynthesis; L-threonine from L-aspartate: step 4/5. Catalyzes the ATP-dependent phosphorylation of L-homoserine to L-homoserine phosphate. This is Homoserine kinase from Chlorobaculum tepidum (strain ATCC 49652 / DSM 12025 / NBRC 103806 / TLS) (Chlorobium tepidum).